The sequence spans 50 residues: Protein HokE (50 aa).

The helical transmembrane segment at 5–25 (YALVAVIVLCLTVLGFTLLVG) threads the bilayer.

Belongs to the Hok/Gef family.

It localises to the cell inner membrane. Its function is as follows. Toxic component of a type I toxin-antitoxin (TA) system. When overexpressed kills cells within minutes; causes collapse of the transmembrane potential and arrest of respiration. Its toxic effect is probably neutralized by an antisense antitoxin Sok RNA. The chain is Protein HokE (hokE) from Escherichia coli O157:H7.